A 330-amino-acid chain; its full sequence is 2-keto-3-deoxygluconate permease (330 aa).

10 helical membrane-spanning segments follow: residues 10-30 (VPGG…TFAP), 42-62 (ALIT…GATI), 77-97 (LLLG…QFIP), 100-120 (GIQS…VMNE), 140-160 (GAFA…TFGV), 163-183 (LAAF…LGCI), 200-220 (PAII…GMLI), 224-244 (LLGI…LFLL), 254-274 (VAGV…YALA), and 289-309 (AIIA…TVWV).

Belongs to the KdgT transporter family.

The protein resides in the cell membrane. It carries out the reaction 2-dehydro-3-deoxy-D-gluconate(in) + H(+)(in) = 2-dehydro-3-deoxy-D-gluconate(out) + H(+)(out). In terms of biological role, catalyzes the proton-dependent uptake of 2-keto-3-deoxygluconate (KDG) into the cell. The polypeptide is 2-keto-3-deoxygluconate permease (Bacillus subtilis (strain 168)).